The chain runs to 315 residues: tRNA dimethylallyltransferase (315 aa).

13 to 20 is a binding site for ATP; sequence GPTASGKT. Residue 15-20 coordinates substrate; it reads TASGKT. Interaction with substrate tRNA stretches follow at residues 38 to 41, 162 to 166, 243 to 248, and 276 to 283; these read DSAL, QRLSR, RCVGYR, and KRQITWLR.

It belongs to the IPP transferase family. As to quaternary structure, monomer. Mg(2+) serves as cofactor.

It catalyses the reaction adenosine(37) in tRNA + dimethylallyl diphosphate = N(6)-dimethylallyladenosine(37) in tRNA + diphosphate. Catalyzes the transfer of a dimethylallyl group onto the adenine at position 37 in tRNAs that read codons beginning with uridine, leading to the formation of N6-(dimethylallyl)adenosine (i(6)A). This chain is tRNA dimethylallyltransferase, found in Vibrio vulnificus (strain YJ016).